The sequence spans 779 residues: DNA topoisomerase 1 (779 aa).

A Toprim domain is found at 1–111 (MKLVIVESPA…VESDDFFKRV (111 aa)). Positions 7 and 80 each coordinate Mg(2+). In terms of domain architecture, Topo IA-type catalytic spans 132 to 568 (DTNLVNAQQA…FWSGFNNNIE (437 aa)). The interaction with DNA stretch occupies residues 166–171 (SAGRVQ). Y304 (O-(5'-phospho-DNA)-tyrosine intermediate) is an active-site residue. The C4-type zinc-finger motif lies at 600–627 (CPSCKTGQLSLKLGKFGAFLACSNYPEC).

Belongs to the type IA topoisomerase family. As to quaternary structure, monomer. It depends on Mg(2+) as a cofactor.

The catalysed reaction is ATP-independent breakage of single-stranded DNA, followed by passage and rejoining.. In terms of biological role, releases the supercoiling and torsional tension of DNA, which is introduced during the DNA replication and transcription, by transiently cleaving and rejoining one strand of the DNA duplex. Introduces a single-strand break via transesterification at a target site in duplex DNA. The scissile phosphodiester is attacked by the catalytic tyrosine of the enzyme, resulting in the formation of a DNA-(5'-phosphotyrosyl)-enzyme intermediate and the expulsion of a 3'-OH DNA strand. The free DNA strand then undergoes passage around the unbroken strand, thus removing DNA supercoils. Finally, in the religation step, the DNA 3'-OH attacks the covalent intermediate to expel the active-site tyrosine and restore the DNA phosphodiester backbone. In Rickettsia typhi (strain ATCC VR-144 / Wilmington), this protein is DNA topoisomerase 1.